The following is a 713-amino-acid chain: Ribosomal RNA large subunit methyltransferase K/L (713 aa).

In terms of domain architecture, THUMP spans 43-154; it reads LAYRITLWTR…NGVITIAMNF (112 aa).

The protein belongs to the methyltransferase superfamily. RlmKL family.

It is found in the cytoplasm. It carries out the reaction guanosine(2445) in 23S rRNA + S-adenosyl-L-methionine = N(2)-methylguanosine(2445) in 23S rRNA + S-adenosyl-L-homocysteine + H(+). It catalyses the reaction guanosine(2069) in 23S rRNA + S-adenosyl-L-methionine = N(2)-methylguanosine(2069) in 23S rRNA + S-adenosyl-L-homocysteine + H(+). Functionally, specifically methylates the guanine in position 2445 (m2G2445) and the guanine in position 2069 (m7G2069) of 23S rRNA. The sequence is that of Ribosomal RNA large subunit methyltransferase K/L from Shewanella sp. (strain MR-4).